A 243-amino-acid polypeptide reads, in one-letter code: Cell surface glycoprotein CD200 receptor 1-B (243 aa).

The Cytoplasmic segment spans residues 1-29 (MEISQQAGWCKKPASPMNTRAALEAVRNT). Residues 30–47 (AWTIVLLTSAAVMGASGI) traverse the membrane as a helical; Signal-anchor for type II membrane protein segment. The Ig-like V-type domain occupies 47-146 (ISRVSANLGH…GNFHYLYHLT (100 aa)). At 48 to 243 (SRVSANLGHS…LAQLPGGSAP (196 aa)) the chain is on the lumenal side. 2 disulfide bridges follow: cysteine 62–cysteine 130 and cysteine 165–cysteine 214. Residues asparagine 64, asparagine 67, asparagine 127, asparagine 193, asparagine 222, and asparagine 228 are each glycosylated (N-linked (GlcNAc...) asparagine). The Ig-like C2-type domain maps to 144 to 228 (HLTVLVAPRM…ATLNETRSIN (85 aa)).

The protein belongs to the CD200R family. As to expression, expressed in peripheral blood lymphocytes (PBL) and peripheral blood mononuclear cells (PBMC).

It localises to the membrane. The polypeptide is Cell surface glycoprotein CD200 receptor 1-B (CD200R1B) (Gallus gallus (Chicken)).